Consider the following 148-residue polypeptide: SsrA-binding protein (148 aa).

It belongs to the SmpB family.

The protein localises to the cytoplasm. Required for rescue of stalled ribosomes mediated by trans-translation. Binds to transfer-messenger RNA (tmRNA), required for stable association of tmRNA with ribosomes. tmRNA and SmpB together mimic tRNA shape, replacing the anticodon stem-loop with SmpB. tmRNA is encoded by the ssrA gene; the 2 termini fold to resemble tRNA(Ala) and it encodes a 'tag peptide', a short internal open reading frame. During trans-translation Ala-aminoacylated tmRNA acts like a tRNA, entering the A-site of stalled ribosomes, displacing the stalled mRNA. The ribosome then switches to translate the ORF on the tmRNA; the nascent peptide is terminated with the 'tag peptide' encoded by the tmRNA and targeted for degradation. The ribosome is freed to recommence translation, which seems to be the essential function of trans-translation. In Mycoplasma mycoides subsp. mycoides SC (strain CCUG 32753 / NCTC 10114 / PG1), this protein is SsrA-binding protein.